The chain runs to 518 residues: GMP synthase [glutamine-hydrolyzing] (518 aa).

One can recognise a Glutamine amidotransferase type-1 domain in the interval Thr-8–Asn-201. Cys-85 functions as the Nucleophile in the catalytic mechanism. Catalysis depends on residues His-175 and Glu-177. Residues Trp-202 to Arg-393 enclose the GMPS ATP-PPase domain. Ser-229–Ser-235 contributes to the ATP binding site.

As to quaternary structure, homodimer.

The catalysed reaction is XMP + L-glutamine + ATP + H2O = GMP + L-glutamate + AMP + diphosphate + 2 H(+). It participates in purine metabolism; GMP biosynthesis; GMP from XMP (L-Gln route): step 1/1. In terms of biological role, catalyzes the synthesis of GMP from XMP. This is GMP synthase [glutamine-hydrolyzing] from Bartonella henselae (strain ATCC 49882 / DSM 28221 / CCUG 30454 / Houston 1) (Rochalimaea henselae).